The sequence spans 484 residues: UDP-N-acetylmuramoyl-L-alanyl-D-glutamate--L-lysine ligase (484 aa).

S43 contacts UDP-N-acetyl-alpha-D-muramoyl-L-alanyl-D-glutamate. 119–125 (GTKGKTT) contacts ATP. UDP-N-acetyl-alpha-D-muramoyl-L-alanyl-D-glutamate-binding positions include 161–162 (TT), S188, and R196. K230 carries the N6-carboxylysine modification. Positions 405–408 (DDPN) match the L-lysine recognition motif motif.

It belongs to the MurCDEF family. MurE subfamily. Carboxylation is probably crucial for Mg(2+) binding and, consequently, for the gamma-phosphate positioning of ATP.

The protein localises to the cytoplasm. The enzyme catalyses UDP-N-acetyl-alpha-D-muramoyl-L-alanyl-D-glutamate + L-lysine + ATP = UDP-N-acetyl-alpha-D-muramoyl-L-alanyl-gamma-D-glutamyl-L-lysine + ADP + phosphate + H(+). The protein operates within cell wall biogenesis; peptidoglycan biosynthesis. Catalyzes the addition of L-lysine to the nucleotide precursor UDP-N-acetylmuramoyl-L-alanyl-D-glutamate (UMAG) in the biosynthesis of bacterial cell-wall peptidoglycan. This is UDP-N-acetylmuramoyl-L-alanyl-D-glutamate--L-lysine ligase from Streptococcus agalactiae serotype Ia (strain ATCC 27591 / A909 / CDC SS700).